The following is a 625-amino-acid chain: Basic helix-loop-helix ARNT-like protein 1 (625 aa).

Residues Met1–Arg60 are disordered. Ser17 is subject to Phosphoserine; by GSK3-beta. The segment covering Ser17–Gly32 has biased composition (low complexity). Position 21 is a phosphothreonine; by GSK3-beta (Thr21). The short motif at Asn36–Gly41 is the Nuclear localization signal element. The span at Asp51–Arg60 shows a compositional bias: basic and acidic residues. Residues Asn72–Leu125 enclose the bHLH domain. Ser78 carries the phosphoserine modification. The residue at position 90 (Ser90) is a Phosphoserine; by CK2. A Nuclear export signal 1 motif is present at residues Leu142–Leu152. The region spanning Ser143–Pro215 is the PAS 1 domain. Lys252 is covalently cross-linked (Glycyl lysine isopeptide (Lys-Gly) (interchain with G-Cter in SUMO2 and SUMO3)). Residue Lys259 forms a Glycyl lysine isopeptide (Lys-Gly) (interchain with G-Cter in SUMO); alternate linkage. Lys259 participates in a covalent cross-link: Glycyl lysine isopeptide (Lys-Gly) (interchain with G-Cter in SUMO2); alternate. Positions Pro325–Arg395 constitute a PAS 2 domain. The short motif at Leu360–Leu368 is the Nuclear export signal 2 element. Residues Thr400 to Asn443 enclose the PAC domain. Disordered stretches follow at residues Gln454–Ala491 and Gly510–Asn594. An interaction with CIART region spans residues Arg507–Gln587. Residues Gly510–Pro520 are compositionally biased toward low complexity. Lys537 carries the N6-acetyllysine modification.

Component of the circadian clock oscillator which includes the CRY1/2 proteins, CLOCK or NPAS2, BMAL1 or BMAL2, CSNK1D and/or CSNK1E, TIMELESS and the PER1/2/3 proteins. Forms a heterodimer with CLOCK. The CLOCK-BMAL1 heterodimer is required for E-box-dependent transactivation, for CLOCK nuclear translocation and degradation, and, for phosphorylation of both CLOCK and BMAL1. Part of a nuclear complex which also includes RACK1 and PRKCA; RACK1 and PRKCA are recruited to the complex in a circadian manner. Interacts with NPAS2. Interacts with EZH2. Interacts with SUMO3. Interacts with SIRT1. Interacts with AHR. Interacts with ID1, ID2 and ID3. Interacts with DDX4. Interacts with OGT. Interacts with EED and SUZ12. Interacts with MTA1. Interacts with CIART. Interacts with HSP90. Interacts with KAT2B and EP300. Interacts with BHLHE40/DEC1 and BHLHE41/DEC2. Interacts with RELB and the interaction is enhanced in the presence of CLOCK. Interacts with PER1, PER2, CRY1 and CRY2 and this interaction requires a translocation to the nucleus. Interaction of the CLOCK-BMAL1 heterodimer with PER or CRY inhibits transcription activation. Interaction of the CLOCK-BMAL1 with CRY1 is independent of DNA but with PER2 is off DNA. The CLOCK-BMAL1 heterodimer interacts with GSK3B. Interacts with KDM5A. Interacts with KMT2A; in a circadian manner. Interacts with UBE3A. Interacts with PRKCG. Interacts with MAGEL2. Interacts with NCOA2. Interacts with THRAP3. The CLOCK-BMAL1 heterodimer interacts with PASD1. Interacts with PASD1. Interacts with USP9X. Interacts with PIWIL2 (via PIWI domain). Interacts with HDAC3. Interacts with HNF4A. Post-translationally, ubiquitinated, leading to its proteasomal degradation. Deubiquitinated by USP9X. O-glycosylated; contains O-GlcNAc. O-glycosylation by OGT prevents protein degradation by inhibiting ubiquitination. It also stabilizes the CLOCK-BMAL1 heterodimer thereby increasing CLOCK-BMAL1-mediated transcription of genes in the negative loop of the circadian clock such as PER1/2/3 and CRY1/2. In terms of processing, acetylated on Lys-537 by CLOCK during the repression phase of the circadian cycle. Acetylation facilitates recruitment of CRY1 protein and initiates the repression phase of the circadian cycle. Acetylated at Lys-537 by KAT5 during the activation phase of the cycle, leading to recruitment of the positive transcription elongation factor b (P-TEFb) and BRD4, followed by productive elongation of circadian transcripts. Deacetylated by SIRT1, which may result in decreased protein stability. Post-translationally, phosphorylated upon dimerization with CLOCK. Phosphorylation enhances the transcriptional activity, alters the subcellular localization and decreases the stability of the CLOCK-BMAL1 heterodimer by promoting its degradation. Phosphorylation shows circadian variations in the liver with a peak between CT10 to CT14. Phosphorylation at Ser-90 by CK2 is essential for its nuclear localization, its interaction with CLOCK and controls CLOCK nuclear entry. Dephosphorylation at Ser-78 is important for dimerization with CLOCK and transcriptional activity. Sumoylated on Lys-259 upon dimerization with CLOCK. Predominantly conjugated to poly-SUMO2/3 rather than SUMO1 and the level of these conjugates undergo rhythmic variation, peaking at CT9-CT12. Sumoylation localizes it exclusively to the PML body and promotes its ubiquitination in the PML body, ubiquitin-dependent proteasomal degradation and the transcriptional activity of the CLOCK-BMAL1 heterodimer. In terms of processing, undergoes lysosome-mediated degradation in a time-dependent manner in the liver.

It is found in the nucleus. The protein resides in the cytoplasm. Its subcellular location is the PML body. Functionally, transcriptional activator which forms a core component of the circadian clock. The circadian clock, an internal time-keeping system, regulates various physiological processes through the generation of approximately 24 hour circadian rhythms in gene expression, which are translated into rhythms in metabolism and behavior. It is derived from the Latin roots 'circa' (about) and 'diem' (day) and acts as an important regulator of a wide array of physiological functions including metabolism, sleep, body temperature, blood pressure, endocrine, immune, cardiovascular, and renal function. Consists of two major components: the central clock, residing in the suprachiasmatic nucleus (SCN) of the brain, and the peripheral clocks that are present in nearly every tissue and organ system. Both the central and peripheral clocks can be reset by environmental cues, also known as Zeitgebers (German for 'timegivers'). The predominant Zeitgeber for the central clock is light, which is sensed by retina and signals directly to the SCN. The central clock entrains the peripheral clocks through neuronal and hormonal signals, body temperature and feeding-related cues, aligning all clocks with the external light/dark cycle. Circadian rhythms allow an organism to achieve temporal homeostasis with its environment at the molecular level by regulating gene expression to create a peak of protein expression once every 24 hours to control when a particular physiological process is most active with respect to the solar day. Transcription and translation of core clock components (CLOCK, NPAS2, BMAL1, BMAL2, PER1, PER2, PER3, CRY1 and CRY2) plays a critical role in rhythm generation, whereas delays imposed by post-translational modifications (PTMs) are important for determining the period (tau) of the rhythms (tau refers to the period of a rhythm and is the length, in time, of one complete cycle). A diurnal rhythm is synchronized with the day/night cycle, while the ultradian and infradian rhythms have a period shorter and longer than 24 hours, respectively. Disruptions in the circadian rhythms contribute to the pathology of cardiovascular diseases, cancer, metabolic syndromes and aging. A transcription/translation feedback loop (TTFL) forms the core of the molecular circadian clock mechanism. Transcription factors, CLOCK or NPAS2 and BMAL1 or BMAL2, form the positive limb of the feedback loop, act in the form of a heterodimer and activate the transcription of core clock genes and clock-controlled genes (involved in key metabolic processes), harboring E-box elements (5'-CACGTG-3') within their promoters. The core clock genes: PER1/2/3 and CRY1/2 which are transcriptional repressors form the negative limb of the feedback loop and interact with the CLOCK|NPAS2-BMAL1|BMAL2 heterodimer inhibiting its activity and thereby negatively regulating their own expression. This heterodimer also activates nuclear receptors NR1D1/2 and RORA/B/G, which form a second feedback loop and which activate and repress BMAL1 transcription, respectively. BMAL1 positively regulates myogenesis and negatively regulates adipogenesis via the transcriptional control of the genes of the canonical Wnt signaling pathway. Plays a role in normal pancreatic beta-cell function; regulates glucose-stimulated insulin secretion via the regulation of antioxidant genes NFE2L2/NRF2 and its targets SESN2, PRDX3, CCLC and CCLM. Negatively regulates the mTORC1 signaling pathway; regulates the expression of MTOR and DEPTOR. Controls diurnal oscillations of Ly6C inflammatory monocytes; rhythmic recruitment of the PRC2 complex imparts diurnal variation to chemokine expression that is necessary to sustain Ly6C monocyte rhythms. Regulates the expression of HSD3B2, STAR, PTGS2, CYP11A1, CYP19A1 and LHCGR in the ovary and also the genes involved in hair growth. Plays an important role in adult hippocampal neurogenesis by regulating the timely entry of neural stem/progenitor cells (NSPCs) into the cell cycle and the number of cell divisions that take place prior to cell-cycle exit. Regulates the circadian expression of CIART and KLF11. The CLOCK-BMAL1 heterodimer regulates the circadian expression of SERPINE1/PAI1, VWF, B3, CCRN4L/NOC, NAMPT, DBP, MYOD1, PPARGC1A, PPARGC1B, SIRT1, GYS2, F7, NGFR, GNRHR, BHLHE40/DEC1, ATF4, MTA1, KLF10 and also genes implicated in glucose and lipid metabolism. Promotes rhythmic chromatin opening, regulating the DNA accessibility of other transcription factors. The NPAS2-BMAL1 heterodimer positively regulates the expression of MAOA, F7 and LDHA and modulates the circadian rhythm of daytime contrast sensitivity by regulating the rhythmic expression of adenylate cyclase type 1 (ADCY1) in the retina. The preferred binding motif for the CLOCK-BMAL1 heterodimer is 5'-CACGTGA-3', which contains a flanking adenine nucleotide at the 3-prime end of the canonical 6-nucleotide E-box sequence. CLOCK specifically binds to the half-site 5'-CAC-3', while BMAL1 binds to the half-site 5'-GTGA-3'. The CLOCK-BMAL1 heterodimer also recognizes the non-canonical E-box motifs 5'-AACGTGA-3' and 5'-CATGTGA-3'. Essential for the rhythmic interaction of CLOCK with ASS1 and plays a critical role in positively regulating CLOCK-mediated acetylation of ASS1. Plays a role in protecting against lethal sepsis by limiting the expression of immune checkpoint protein CD274 in macrophages in a PKM2-dependent manner. Regulates the diurnal rhythms of skeletal muscle metabolism via transcriptional activation of genes promoting triglyceride synthesis (DGAT2) and metabolic efficiency (COQ10B). This is Basic helix-loop-helix ARNT-like protein 1 (BMAL1) from Pongo abelii (Sumatran orangutan).